Here is a 349-residue protein sequence, read N- to C-terminus: MTLGPIMLDVVGTELTQEDIRRIRHPLVGGVILFARNFESPAQLKALTDSIHAVRQPPLLIAVDHEGGRVQRFREGFTRIPPMREFGKIWDEHPRKARQLAEEAGWIIAAELRAHGIDFSFTPVLDMDYGESQVIGDRAFHGDRQAINELAFSLMQGLKRGGMAAVGKHFPGHGYVVADSHVAIPVDERDFDQIASTDMQTFRQLIDDGIQAIMPAHVIYPKVDNKPAGFSERWLQKVLRQRLGFNGVIFSDDLSMEGAGVVGDVTQRALAALNAGCDMVLLCNQPDKADELLANLKWDIQAQSLARLARMHGGRHPSSMVALHEDPDFMHAVHRVGQVGKADGDLPFA.

Substrate contacts are provided by residues D64, R72, R138, and 168-169 (KH). H181 serves as the catalytic Proton donor/acceptor. The active-site Nucleophile is D252.

This sequence belongs to the glycosyl hydrolase 3 family. NagZ subfamily.

The protein resides in the cytoplasm. It carries out the reaction Hydrolysis of terminal non-reducing N-acetyl-D-hexosamine residues in N-acetyl-beta-D-hexosaminides.. It participates in cell wall biogenesis; peptidoglycan recycling. Its function is as follows. Plays a role in peptidoglycan recycling by cleaving the terminal beta-1,4-linked N-acetylglucosamine (GlcNAc) from peptide-linked peptidoglycan fragments, giving rise to free GlcNAc, anhydro-N-acetylmuramic acid and anhydro-N-acetylmuramic acid-linked peptides. The polypeptide is Beta-hexosaminidase (Methylobacillus flagellatus (strain ATCC 51484 / DSM 6875 / VKM B-1610 / KT)).